A 364-amino-acid polypeptide reads, in one-letter code: Zinc finger protein 474 (364 aa).

Positions 1-10 (MERGKKKRIS) are enriched in basic residues. Disordered stretches follow at residues 1–21 (MERGKKKRISNKLQQTFHHSK) and 37–60 (SYSSLSPETESVNPGENIKTDTQK). The C2HC/C3H-type 1 zinc-finger motif lies at 93 to 122 (GFRVCYICGREFGSQSIAIHEPQCLQKWHI). Positions 97, 100, 112, and 116 each coordinate Zn(2+). The interval 127-147 (LPKHLRRPEPSKPQSLSSSGS) is disordered. Residues 138–147 (KPQSLSSSGS) show a composition bias toward low complexity. 3 C2HC/C3H-type zinc fingers span residues 164–193 (QLLPCESCGRTFLPDHLLVHHRSCKPKGEG), 220–249 (RTVICYICGKEFGTLSLPIHEPKCLEKWKM), and 283–312 (QLVFCPHCSRIFTSDRLLVHQRSCKTHPYG). Residues Cys-168, Cys-171, His-183, Cys-187, Cys-224, Cys-227, His-239, Cys-243, Cys-287, Cys-290, His-302, and Cys-306 each coordinate Zn(2+). Residues 187–214 (CKPKGEGPRAPHSNSSDHLTGLKKACSG) form a disordered region.

Zn(2+) serves as cofactor.

This is Zinc finger protein 474 (ZNF474) from Homo sapiens (Human).